An 878-amino-acid chain; its full sequence is Alanine--tRNA ligase (878 aa).

Zn(2+) is bound by residues His570, His574, Cys672, and His676. The disordered stretch occupies residues 844–864 (GGKGGGGRPDMAQAGGPDASA). The segment covering 855–864 (AQAGGPDASA) has biased composition (low complexity).

Belongs to the class-II aminoacyl-tRNA synthetase family. The cofactor is Zn(2+).

The protein resides in the cytoplasm. The catalysed reaction is tRNA(Ala) + L-alanine + ATP = L-alanyl-tRNA(Ala) + AMP + diphosphate. In terms of biological role, catalyzes the attachment of alanine to tRNA(Ala) in a two-step reaction: alanine is first activated by ATP to form Ala-AMP and then transferred to the acceptor end of tRNA(Ala). Also edits incorrectly charged Ser-tRNA(Ala) and Gly-tRNA(Ala) via its editing domain. The chain is Alanine--tRNA ligase from Paramagnetospirillum magneticum (strain ATCC 700264 / AMB-1) (Magnetospirillum magneticum).